A 266-amino-acid chain; its full sequence is MYIELQTKKVSVLDLKGNQLEEIELPLFFSYPVRKDLIRRVFLSEFTKSLQPKGRDPLAGKRTSALSFGINLGIARVPRVKGSGEAALAPNTVGGRLAFPPTTEKRLVEEVNLKEKKLGIISALAATADPNFVKARGHRFTSNNVPIILVDDFENISKAKEIMDILKSIGVVDDIKRVKESKGVRAGKGKMRGRRYQIAKGPLIVVSNHKSPVVESASNIPGVNVVSANLVSVIHLAPGGHPGRLTIYTKSSINILRQRFEGRLNL.

This sequence belongs to the universal ribosomal protein uL4 family. In terms of assembly, part of the 50S ribosomal subunit.

Its function is as follows. One of the primary rRNA binding proteins, this protein initially binds near the 5'-end of the 23S rRNA. It is important during the early stages of 50S assembly. It makes multiple contacts with different domains of the 23S rRNA in the assembled 50S subunit and ribosome. Functionally, forms part of the polypeptide exit tunnel. The sequence is that of Large ribosomal subunit protein uL4 from Sulfolobus acidocaldarius (strain ATCC 33909 / DSM 639 / JCM 8929 / NBRC 15157 / NCIMB 11770).